The chain runs to 185 residues: Protein OPG161 (185 aa).

The Intravirion portion of the chain corresponds to 1 to 33 (MMTPENDEEQTSVFSATVYGDKIQGKNKRKRVI). Residues 34–56 (GLCIRISMVISLLSMITMSAFLI) form a helical membrane-spanning segment. Residues 57-185 (VRLNQCMSAN…RKYFCVKTMN (129 aa)) lie on the Virion surface side of the membrane. Residues 98–185 (ESCNGLYYQG…RKYFCVKTMN (88 aa)) are C-type lectin-like domain. N125 and N135 each carry an N-linked (GlcNAc...) asparagine; by host glycan.

The protein belongs to the orthopoxvirus OPG161 family. Homodimer, disulfide-linked. Interacts with protein OPG190. Interacts (via C-terminus) with protein OPG164. Interacts with OPG162.

The protein resides in the virion membrane. Its subcellular location is the host membrane. In terms of biological role, forms a complex with OPG162 and OPG190 to coordinate the incorporation of OPG164 into wrapped enveloped virion (EV) membranes and, subsequently, the production of actin tails. Therefore plays an essential role in efficient cell-to-cell spread of viral particles. In Homo sapiens (Human), this protein is Protein OPG161 (OPG161).